The primary structure comprises 2242 residues: Multifunctional protein CAD (2242 aa).

Positions 1–365 (MATLFLDDGS…CARDVKLGVN (365 aa)) are GATase (Glutamine amidotransferase). Serine 44, glycine 222, and glycine 224 together coordinate L-glutamine. The Glutamine amidotransferase type-1 domain occupies 177–363 (KIMAVDCGMK…LECARDVKLG (187 aa)). Residue cysteine 252 is the Nucleophile; for GATase activity of the active site. L-glutamine is bound by residues leucine 253, glutamine 256, asparagine 294, glycine 296, and phenylalanine 297. Residues histidine 336 and glutamate 338 each act as for GATase activity in the active site. A linker region spans residues 366-397 (LDKTVKGRVISHYSFKNGTENSKTPPGRIQPH). A CPSase A region spans residues 398 to 937 (KVLILGSGGL…GEGHDLDFTK (540 aa)). Positions 398–1462 (KVLILGSGGL…TPPVKTHIDS (1065 aa)) are CPSase (Carbamoyl-phosphate synthase). Residues arginine 518, arginine 558, glycine 564, glycine 565, lysine 595, glutamate 602, glycine 628, isoleucine 629, histidine 630, glutamine 671, and glutamate 685 each contribute to the ATP site. 2 consecutive ATP-grasp domains span residues 522–714 (VEKM…KLAL) and 1057–1248 (SRML…KVIM). Glutamine 671, glutamate 685, and asparagine 687 together coordinate Mg(2+). Residues glutamine 671, glutamate 685, and asparagine 687 each contribute to the Mn(2+) site. Residues 938-1462 (PHVMVIGSGV…TPPVKTHIDS (525 aa)) form a CPSase B region. Arginine 1093, lysine 1132, isoleucine 1134, glutamate 1139, glycine 1164, valine 1165, histidine 1166, serine 1167, glutamine 1207, and glutamate 1219 together coordinate ATP. Mg(2+) is bound by residues glutamine 1207, glutamate 1219, and asparagine 1221. Mn(2+) contacts are provided by glutamine 1207, glutamate 1219, and asparagine 1221. The 157-residue stretch at 1313–1469 (FKIPKKNILL…IDSMSSHKLI (157 aa)) folds into the MGS-like domain. Residues 1463–1796 (MSSHKLIRLP…KGRVRRVVLR (334 aa)) are DHOase (dihydroorotase). Positions 1478 and 1480 each coordinate Zn(2+). Residues arginine 1482 and asparagine 1512 each coordinate (S)-dihydroorotate. Zn(2+)-binding residues include lysine 1563, histidine 1597, cysteine 1620, histidine 1621, and glutamate 1644. Lysine 1563 carries the post-translational modification N6-carboxylysine. Arginine 1668 contributes to the (S)-dihydroorotate binding site. Aspartate 1693 lines the Zn(2+) pocket. Aspartate 1693 acts as the For DHOase activity in catalysis. (S)-dihydroorotate-binding residues include histidine 1697 and proline 1709. The linker stretch occupies residues 1797–1934 (GEVAYIDGQV…QAVPHPYSLL (138 aa)). Residues 1829-1862 (PTTVKTPEHSKPTQTETVRTRTASPRRLASSGPA) are disordered. Polar residues predominate over residues 1840-1851 (PTQTETVRTRTA). Residues 1935–2242 (LHPFVGQHIL…ALLATVLGKF (308 aa)) form an ATCase (Aspartate transcarbamylase) region. Carbamoyl phosphate is bound by residues arginine 1992 and threonine 1993. Residue lysine 2020 participates in L-aspartate binding. The carbamoyl phosphate site is built by arginine 2041, histidine 2069, and glutamine 2072. Positions 2102 and 2163 each coordinate L-aspartate. Leucine 2202 and proline 2203 together coordinate carbamoyl phosphate.

This sequence in the N-terminal section; belongs to the CarA family. The protein in the 2nd section; belongs to the CarB family. It in the 3rd section; belongs to the metallo-dependent hydrolases superfamily. DHOase family. CAD subfamily. In the C-terminal section; belongs to the aspartate/ornithine carbamoyltransferase superfamily. ATCase family. As to quaternary structure, homohexamer. Requires Mg(2+) as cofactor. The cofactor is Mn(2+). Zn(2+) is required as a cofactor. Present in the testis but not in the liver.

It is found in the cytoplasm. The protein localises to the nucleus. The enzyme catalyses hydrogencarbonate + L-glutamine + 2 ATP + H2O = carbamoyl phosphate + L-glutamate + 2 ADP + phosphate + 2 H(+). The catalysed reaction is L-glutamine + H2O = L-glutamate + NH4(+). It carries out the reaction hydrogencarbonate + NH4(+) + 2 ATP = carbamoyl phosphate + 2 ADP + phosphate + 2 H(+). It catalyses the reaction carbamoyl phosphate + L-aspartate = N-carbamoyl-L-aspartate + phosphate + H(+). The enzyme catalyses (S)-dihydroorotate + H2O = N-carbamoyl-L-aspartate + H(+). The protein operates within pyrimidine metabolism; UMP biosynthesis via de novo pathway; (S)-dihydroorotate from bicarbonate: step 1/3. It participates in pyrimidine metabolism; UMP biosynthesis via de novo pathway; (S)-dihydroorotate from bicarbonate: step 2/3. It functions in the pathway pyrimidine metabolism; UMP biosynthesis via de novo pathway; (S)-dihydroorotate from bicarbonate: step 3/3. Its activity is regulated as follows. Allosterically regulated and controlled by phosphorylation. 5-phosphoribose 1-diphosphate is an activator while UMP is an inhibitor of the CPSase reaction. Functionally, multifunctional protein that encodes the first 3 enzymatic activities of the de novo pyrimidine pathway: carbamoylphosphate synthetase (CPSase; EC 6.3.5.5), aspartate transcarbamylase (ATCase; EC 2.1.3.2) and dihydroorotase (DHOase; EC 3.5.2.3). The CPSase-function is accomplished in 2 steps, by a glutamine-dependent amidotransferase activity (GATase) that binds and cleaves glutamine to produce ammonia, followed by an ammonium-dependent carbamoyl phosphate synthetase, which reacts with the ammonia, hydrogencarbonate and ATP to form carbamoyl phosphate. The endogenously produced carbamoyl phosphate is sequestered and channeled to the ATCase active site. ATCase then catalyzes the formation of carbamoyl-L-aspartate from L-aspartate and carbamoyl phosphate. In the last step, DHOase catalyzes the cyclization of carbamoyl aspartate to dihydroorotate. In Squalus acanthias (Spiny dogfish), this protein is Multifunctional protein CAD (CAD).